The primary structure comprises 464 residues: Probable 1,4-beta-D-glucan cellobiohydrolase C (464 aa).

Residues 1–19 form the signal peptide; sequence MKNFAPSLALSLLLPTVQA. Residues 20–55 enclose the CBM1 domain; it reads QQTMWGQCGGAGWSGATDCVAGGVCSTQNAYYAQCL. Intrachain disulfides connect Cys27–Cys44 and Cys38–Cys54. Positions 59–102 are thr-rich linker; the sequence is TTATTLSTTSKGTTTTTTSSTTSTGGGSSSTTTKTSTSAGPTVT. Over residues 65 to 100 the composition is skewed to low complexity; that stretch reads STTSKGTTTTTTSSTTSTGGGSSSTTTKTSTSAGPT. The interval 65–108 is disordered; sequence STTSKGTTTTTTSSTTSTGGGSSSTTTKTSTSAGPTVTGSPSGN. Residues 103–464 form a catalytic region; that stretch reads GSPSGNPFSG…QLLTNANPAF (362 aa). Residue Asp194 is part of the active site. Intrachain disulfides connect Cys195–Cys254 and Cys386–Cys433. The active-site Proton donor is the Asp240. The active-site Nucleophile is Asp419.

This sequence belongs to the glycosyl hydrolase 6 (cellulase B) family.

The protein localises to the secreted. It catalyses the reaction Hydrolysis of (1-&gt;4)-beta-D-glucosidic linkages in cellulose and cellotetraose, releasing cellobiose from the non-reducing ends of the chains.. Functionally, the biological conversion of cellulose to glucose generally requires three types of hydrolytic enzymes: (1) Endoglucanases which cut internal beta-1,4-glucosidic bonds; (2) Exocellobiohydrolases that cut the disaccharide cellobiose from the non-reducing end of the cellulose polymer chain; (3) Beta-1,4-glucosidases which hydrolyze the cellobiose and other short cello-oligosaccharides to glucose. This Aspergillus clavatus (strain ATCC 1007 / CBS 513.65 / DSM 816 / NCTC 3887 / NRRL 1 / QM 1276 / 107) protein is Probable 1,4-beta-D-glucan cellobiohydrolase C (cbhC).